Consider the following 343-residue polypeptide: MQLQEIAQKLGCPYEGDPTLEIHGVASLAEARPGELSFLSEARYLPLLEQTQASAVIVEESLVLPRPIACLRGKDPRLLFAQAIELFYQPYRLPVGIHPTAVIDPSVELGEGVAIGPHVVVMEGVKIGDYTQIHPNVTIYPHVRVGSRCQLFANCVIHERTEIGDDCLIHSGAVIGDDGFGHIPLPDGSWRRMLQAGRVVLEDGVEVGSNTTIDRAAVGETRIGRGTKIDNLVQIGHGVKTGSHCLIVAQVGIAGSTQLGHHVILAGQCGLAGHLHIGDGVRVAAQTGVTSDVPAGQTVAGYPHQPIAEWRRSMAVQRHLPELQRALRKLEARVAKLEQNGGR.

The active-site Proton acceptor is His-237.

Belongs to the transferase hexapeptide repeat family. LpxD subfamily. In terms of assembly, homotrimer.

The catalysed reaction is a UDP-3-O-[(3R)-3-hydroxyacyl]-alpha-D-glucosamine + a (3R)-hydroxyacyl-[ACP] = a UDP-2-N,3-O-bis[(3R)-3-hydroxyacyl]-alpha-D-glucosamine + holo-[ACP] + H(+). It functions in the pathway bacterial outer membrane biogenesis; LPS lipid A biosynthesis. In terms of biological role, catalyzes the N-acylation of UDP-3-O-acylglucosamine using 3-hydroxyacyl-ACP as the acyl donor. Is involved in the biosynthesis of lipid A, a phosphorylated glycolipid that anchors the lipopolysaccharide to the outer membrane of the cell. This Synechococcus sp. (strain JA-3-3Ab) (Cyanobacteria bacterium Yellowstone A-Prime) protein is UDP-3-O-acylglucosamine N-acyltransferase.